The primary structure comprises 818 residues: Dipeptidyl aminopeptidase B (818 aa).

Topologically, residues 1 to 29 are cytoplasmic; the sequence is MEGGEEEVERIPDELFDTKKKHLLDKLIR. The helical; Signal-anchor for type II membrane protein transmembrane segment at 30-45 threads the bilayer; sequence VGIILVLLIWGTVLLL. Topologically, residues 46–818 are lumenal; sequence KSIPHHSNTP…KRAFDGQFVK (773 aa). Residues N63, N79, N110, N139, N372, N392, and N421 are each glycosylated (N-linked (GlcNAc...) asparagine). Catalysis depends on S679, which acts as the Charge relay system. N738 carries N-linked (GlcNAc...) asparagine glycosylation. Catalysis depends on charge relay system residues D756 and H789.

The protein belongs to the peptidase S9B family.

Its subcellular location is the vacuole membrane. The polypeptide is Dipeptidyl aminopeptidase B (DAP2) (Saccharomyces cerevisiae (strain ATCC 204508 / S288c) (Baker's yeast)).